The following is a 393-amino-acid chain: 1-deoxy-D-xylulose 5-phosphate reductoisomerase (393 aa).

Residues Thr-10, Gly-11, Ser-12, Ile-13, Arg-37, Gln-38, and Asn-124 each contribute to the NADPH site. Lys-125 contacts 1-deoxy-D-xylulose 5-phosphate. Glu-126 is a binding site for NADPH. A Mn(2+)-binding site is contributed by Asp-150. Residues Ser-151, Glu-152, Ser-179, and His-202 each coordinate 1-deoxy-D-xylulose 5-phosphate. Glu-152 contacts Mn(2+). Gly-208 is an NADPH binding site. 4 residues coordinate 1-deoxy-D-xylulose 5-phosphate: Ser-215, Asn-220, Lys-221, and Glu-224. Position 224 (Glu-224) interacts with Mn(2+).

This sequence belongs to the DXR family. It depends on Mg(2+) as a cofactor. Mn(2+) is required as a cofactor.

It carries out the reaction 2-C-methyl-D-erythritol 4-phosphate + NADP(+) = 1-deoxy-D-xylulose 5-phosphate + NADPH + H(+). Its pathway is isoprenoid biosynthesis; isopentenyl diphosphate biosynthesis via DXP pathway; isopentenyl diphosphate from 1-deoxy-D-xylulose 5-phosphate: step 1/6. In terms of biological role, catalyzes the NADPH-dependent rearrangement and reduction of 1-deoxy-D-xylulose-5-phosphate (DXP) to 2-C-methyl-D-erythritol 4-phosphate (MEP). In Cupriavidus necator (strain ATCC 17699 / DSM 428 / KCTC 22496 / NCIMB 10442 / H16 / Stanier 337) (Ralstonia eutropha), this protein is 1-deoxy-D-xylulose 5-phosphate reductoisomerase.